Consider the following 131-residue polypeptide: Small ribosomal subunit protein uS8 (131 aa).

This sequence belongs to the universal ribosomal protein uS8 family. In terms of assembly, part of the 30S ribosomal subunit. Contacts proteins S5 and S12.

One of the primary rRNA binding proteins, it binds directly to 16S rRNA central domain where it helps coordinate assembly of the platform of the 30S subunit. The chain is Small ribosomal subunit protein uS8 from Methylococcus capsulatus (strain ATCC 33009 / NCIMB 11132 / Bath).